A 254-amino-acid polypeptide reads, in one-letter code: Ribosomal RNA small subunit methyltransferase G (254 aa).

Residues 84–109 form an insert region; it reads NTESKTSLNNAETKNTNEALLTSEPF. S-adenosyl-L-methionine is bound by residues G115, F120, 171–172, and R185; that span reads AE.

It belongs to the methyltransferase superfamily. RNA methyltransferase RsmG family.

The protein localises to the cytoplasm. In terms of biological role, specifically methylates the N7 position of a guanine in 16S rRNA. This is Ribosomal RNA small subunit methyltransferase G from Treponema denticola (strain ATCC 35405 / DSM 14222 / CIP 103919 / JCM 8153 / KCTC 15104).